The chain runs to 766 residues: Serine/threonine-protein kinase PLK4 (766 aa).

Residues 14–267 (YEVQHLLGKG…LEAVLCHPFM (254 aa)) form the Protein kinase domain. ATP is bound by residues 20–28 (LGKGGFAIV) and lysine 43. Catalysis depends on aspartate 138, which acts as the Proton acceptor. In terms of domain architecture, Cryptic POLO box 1 (CPB1) spans 379–496 (EDRISVPPLN…ARFVGLVKSK (118 aa)). One can recognise a Cryptic POLO box 2 (CPB2) domain in the interval 497–600 (TPKVTYFSTL…GRRPVTDVQP (104 aa)). One can recognise a POLO box domain in the interval 658–737 (PIKRINVPDV…IPNIQIKLKT (80 aa)).

The protein belongs to the protein kinase superfamily. Ser/Thr protein kinase family. CDC5/Polo subfamily. In terms of assembly, homodimer. Ubiquitinated by the SCF(Slimb) ubiquitin ligase complex; leading to its degradation by the proteasome during interphase and regulating centriole number and ensuring the block to centriole reduplication.

Its subcellular location is the cytoplasm. It is found in the cytoskeleton. The protein resides in the microtubule organizing center. It localises to the centrosome. The protein localises to the centriole. It carries out the reaction L-seryl-[protein] + ATP = O-phospho-L-seryl-[protein] + ADP + H(+). The enzyme catalyses L-threonyl-[protein] + ATP = O-phospho-L-threonyl-[protein] + ADP + H(+). Serine/threonine-protein kinase that plays a central role in centriole duplication. Able to trigger procentriole formation on the surface of the mother centriole cylinder, using mother centriole as a platform, leading to the recruitment of centriole biogenesis proteins such as sas-6. When overexpressed, it is able to induce centrosome amplification through the simultaneous generation of multiple procentrioles adjoining each parental centriole during S phase. Centrosome amplification following overexpression can initiate tumorigenesis, highlighting the importance of centrosome regulation in cancers. This chain is Serine/threonine-protein kinase PLK4 (SAK), found in Drosophila yakuba (Fruit fly).